A 585-amino-acid polypeptide reads, in one-letter code: MPTQEVKKHAVLPPIISRNDKEFLESMQRYIITETKRVGCNEEGPPDEYYTIYRNVFDKVIDYVNAYKSVLTSIKKEYDAFIETVKKGRRNAFYLHGKLKVLAAEPTALVYHQRRTIQLEAKMRIIDNNSKAIQLQIDQMKQLRMEYENTEVKLCASSKQLWKPIPGMTLQDSVNLDALNNHKQNLEDKCRKLKQDMSTMYVSAQKKADLDEEMIVLLKRRDIAENLNKDLRFRHQRLQVISHTLNSWMKQNMRIPFKDVLERIQQTKAIYGHAKVVDELFEDDPNKTKEAIVMLYYIERFHELISLGEYEKAACFAANSPKRILQNAGTMNKFKAIGKVRGKPLPLLLFFEAIFNTSQAFKRAINVDLTLEGIKCGLSEERLDLVTHWVTQAKLTFSEKVGDAICAYGEQHPYHKSKCLALAQIVYNECGLHKKAILCLCRQGQFHEAMEHIQQSKDINTDDLIQLITACPQIDLIRGLTEERNGKPPFLSFGLTVLHLFSVDMKKIGMKLLQEVSKAEKDVIEHLVMSDLFCSIEKWQELANICLQNGFKNLSNDIMSILRSQAGVSEISEDDTTNVMEHVFW.

Residues 118-239 (QLEAKMRIID…DLRFRHQRLQ (122 aa)) are a coiled coil.

The polypeptide is Clathrin heavy chain linker domain-containing protein 1 (Clhc1) (Rattus norvegicus (Rat)).